The primary structure comprises 289 residues: Nucleotide-binding protein CHY_0272 (289 aa).

8-15 (GLSGAGKT) serves as a coordination point for ATP. 59–62 (DVRG) contacts GTP.

This sequence belongs to the RapZ-like family.

In terms of biological role, displays ATPase and GTPase activities. The chain is Nucleotide-binding protein CHY_0272 from Carboxydothermus hydrogenoformans (strain ATCC BAA-161 / DSM 6008 / Z-2901).